The following is a 406-amino-acid chain: Protein translocase subunit SecD (406 aa).

Helical transmembrane passes span Ile8–Asn28, Met240–Ala260, Phe262–Ile282, Pro289–Phe309, Phe334–Phe354, and Gly361–Thr381.

It belongs to the SecD/SecF family. SecD subfamily. As to quaternary structure, forms a complex with SecF. Part of the essential Sec protein translocation apparatus which comprises SecA, SecYEG and auxiliary proteins SecDF. Other proteins may also be involved.

Its subcellular location is the cell inner membrane. Its function is as follows. Part of the Sec protein translocase complex. Interacts with the SecYEG preprotein conducting channel. SecDF uses the proton motive force (PMF) to complete protein translocation after the ATP-dependent function of SecA. This chain is Protein translocase subunit SecD, found in Sebaldella termitidis (strain ATCC 33386 / NCTC 11300).